A 727-amino-acid polypeptide reads, in one-letter code: Phosphoribosylformylglycinamidine synthase subunit PurL (727 aa).

His-47 is a catalytic residue. Positions 50 and 89 each coordinate ATP. Mg(2+) is bound at residue Glu-91. Substrate-binding positions include 92 to 95 and Arg-114; that span reads SHNH. Residue His-93 is the Proton acceptor of the active site. Position 115 (Asp-115) interacts with Mg(2+). Gln-238 is a binding site for substrate. Asp-266 lines the Mg(2+) pocket. Position 310 to 312 (310 to 312) interacts with substrate; it reads ESQ. The ATP site is built by Asp-490 and Gly-527. Position 528 (Asn-528) interacts with Mg(2+). Ser-530 lines the substrate pocket.

It belongs to the FGAMS family. As to quaternary structure, monomer. Part of the FGAM synthase complex composed of 1 PurL, 1 PurQ and 2 PurS subunits.

The protein localises to the cytoplasm. The catalysed reaction is N(2)-formyl-N(1)-(5-phospho-beta-D-ribosyl)glycinamide + L-glutamine + ATP + H2O = 2-formamido-N(1)-(5-O-phospho-beta-D-ribosyl)acetamidine + L-glutamate + ADP + phosphate + H(+). It participates in purine metabolism; IMP biosynthesis via de novo pathway; 5-amino-1-(5-phospho-D-ribosyl)imidazole from N(2)-formyl-N(1)-(5-phospho-D-ribosyl)glycinamide: step 1/2. Its function is as follows. Part of the phosphoribosylformylglycinamidine synthase complex involved in the purines biosynthetic pathway. Catalyzes the ATP-dependent conversion of formylglycinamide ribonucleotide (FGAR) and glutamine to yield formylglycinamidine ribonucleotide (FGAM) and glutamate. The FGAM synthase complex is composed of three subunits. PurQ produces an ammonia molecule by converting glutamine to glutamate. PurL transfers the ammonia molecule to FGAR to form FGAM in an ATP-dependent manner. PurS interacts with PurQ and PurL and is thought to assist in the transfer of the ammonia molecule from PurQ to PurL. This chain is Phosphoribosylformylglycinamidine synthase subunit PurL, found in Acidiphilium cryptum (strain JF-5).